The sequence spans 353 residues: Photosystem II D2 protein (353 aa).

Position 2 is an N-acetylthreonine (threonine 2). Threonine 2 carries the phosphothreonine modification. A helical transmembrane segment spans residues 41-61 (CAYFALGGWFTGTTFVTSWYT). Histidine 118 provides a ligand contact to chlorophyll a. A helical transmembrane segment spans residues 125-141 (GFMLRQFELARSVQLRP). Pheophytin a is bound by residues glutamine 130 and asparagine 143. A helical transmembrane segment spans residues 153-166 (VFVSVFLIYPLGQS). A chlorophyll a-binding site is contributed by histidine 198. The helical transmembrane segment at 208–228 (AALLCAIHGATVENTLFEDGD) threads the bilayer. Histidine 215 and phenylalanine 262 together coordinate a plastoquinone. Residue histidine 215 participates in Fe cation binding. Residue histidine 269 coordinates Fe cation. Residues 279–295 (GLWMSAIGVVGLALNLR) traverse the membrane as a helical segment.

The protein belongs to the reaction center PufL/M/PsbA/D family. In terms of assembly, PSII is composed of 1 copy each of membrane proteins PsbA, PsbB, PsbC, PsbD, PsbE, PsbF, PsbH, PsbI, PsbJ, PsbK, PsbL, PsbM, PsbT, PsbX, PsbY, PsbZ, Psb30/Ycf12, at least 3 peripheral proteins of the oxygen-evolving complex and a large number of cofactors. It forms dimeric complexes. Requires The D1/D2 heterodimer binds P680, chlorophylls that are the primary electron donor of PSII, and subsequent electron acceptors. It shares a non-heme iron and each subunit binds pheophytin, quinone, additional chlorophylls, carotenoids and lipids. There is also a Cl(-1) ion associated with D1 and D2, which is required for oxygen evolution. The PSII complex binds additional chlorophylls, carotenoids and specific lipids. as cofactor.

It localises to the plastid. Its subcellular location is the chloroplast thylakoid membrane. The enzyme catalyses 2 a plastoquinone + 4 hnu + 2 H2O = 2 a plastoquinol + O2. Its function is as follows. Photosystem II (PSII) is a light-driven water:plastoquinone oxidoreductase that uses light energy to abstract electrons from H(2)O, generating O(2) and a proton gradient subsequently used for ATP formation. It consists of a core antenna complex that captures photons, and an electron transfer chain that converts photonic excitation into a charge separation. The D1/D2 (PsbA/PsbD) reaction center heterodimer binds P680, the primary electron donor of PSII as well as several subsequent electron acceptors. D2 is needed for assembly of a stable PSII complex. This is Photosystem II D2 protein from Drimys granadensis.